Here is a 43-residue protein sequence, read N- to C-terminus: Potassium channel toxin gamma-KTx 4.9 (43 aa).

4 disulfide bridges follow: C5–C23, C11–C34, C20–C39, and C24–C41.

The protein belongs to the ergtoxin family. Gamma-KTx 4 subfamily. Expressed by the venom gland.

Its subcellular location is the secreted. In terms of biological role, reversibly blocks Kv11/ERG potassium channels. The polypeptide is Potassium channel toxin gamma-KTx 4.9 (Centruroides sculpturatus (Arizona bark scorpion)).